A 637-amino-acid chain; its full sequence is Sodium-dependent proline transporter (637 aa).

Topologically, residues methionine 1 to aspartate 45 are cytoplasmic. Threonine 20 is modified (phosphothreonine). Position 22 is a phosphoserine (serine 22). Transmembrane regions (helical) follow at residues phenylalanine 46–arginine 66, alanine 74–leucine 93, and glycine 117–isoleucine 137. The Extracellular segment spans residues alanine 138–arginine 214. Asparagine 182 carries an N-linked (GlcNAc...) asparagine glycan. A run of 9 helical transmembrane segments spans residues tryptophan 215 to leucine 233, valine 242 to valine 259, isoleucine 295 to tyrosine 312, phenylalanine 324 to leucine 345, leucine 378 to leucine 397, valine 425 to threonine 443, serine 459 to isoleucine 479, alanine 500 to valine 519, and leucine 538 to valine 556. Over alanine 557–methionine 637 the chain is Cytoplasmic. Phosphoserine is present on residues serine 573 and serine 582. Threonine 588 is subject to Phosphothreonine. Tyrosine 591 carries the phosphotyrosine modification. Serine 598 and serine 600 each carry phosphoserine.

This sequence belongs to the sodium:neurotransmitter symporter (SNF) (TC 2.A.22) family. SLC6A7 subfamily.

Its subcellular location is the synaptic cell membrane. It catalyses the reaction L-proline(out) + chloride(out) + 2 Na(+)(out) = L-proline(in) + chloride(in) + 2 Na(+)(in). The catalysed reaction is L-pipecolate(out) + chloride(out) + 2 Na(+)(out) = L-pipecolate(in) + chloride(in) + 2 Na(+)(in). Brain specific sodium (and chloride)-dependent proline transporter. Terminates the action of proline by its high affinity sodium-dependent reuptake into presynaptic terminals. The chain is Sodium-dependent proline transporter from Mus musculus (Mouse).